A 1163-amino-acid polypeptide reads, in one-letter code: Reticulon-4 (1163 aa).

Position 1 is an N-acetylmethionine (Met-1). Disordered regions lie at residues 1 to 184 (MEDI…AASE) and 244 to 270 (SAVS…RATN). Residues 1-989 (MEDIDQSSLV…LYWRDIKKTG (989 aa)) are Cytoplasmic-facing. Phosphoserine is present on residues Ser-7 and Ser-16. Residues 7-16 (SSLVSSSTDS) are compositionally biased toward low complexity. Acidic residues predominate over residues 31–55 (EPEDEEDEEEEEDEEEDDEDLEELE). Low complexity predominate over residues 62-79 (AAGLSAAAVPPAAAAPLL). The segment covering 87–101 (PPAPRGPLPAAPPAA) has biased composition (pro residues). At Ser-107 the chain carries Phosphoserine. Pro residues predominate over residues 138–147 (ARPPPPPPAG). A phosphoserine mark is found at Ser-149, Ser-169, and Ser-171. Ser-329, Ser-333, and Ser-343 each carry phosphoserine. Position 347 is a phosphothreonine (Thr-347). Positions 406-423 (DSLEQKSLGKDSEGRNED) are enriched in basic and acidic residues. Disordered stretches follow at residues 406-437 (DSLE…KDSS) and 454-474 (TANT…DEKK). Position 425 is a phosphoserine (Ser-425). Thr-429 is modified (phosphothreonine). Basic and acidic residues predominate over residues 461-474 (LEDHTSENKTDEKK). 5 positions are modified to phosphoserine: Ser-488, Ser-689, Ser-726, Ser-766, and Ser-830. A Phosphothreonine modification is found at Thr-832. 3 positions are modified to phosphoserine: Ser-855, Ser-922, and Ser-962. In terms of domain architecture, Reticulon spans 976-1163 (VVDLLYWRDI…KIPGLKRKAD (188 aa)). Residues 990-1010 (VVFGASLFLLLSLTVFSIVSV) traverse the membrane as a helical segment. The Lumenal segment spans residues 1011–1104 (TAYIALALLS…LMWVFTYVGA (94 aa)). Residue Lys-1075 is modified to N6-acetyllysine. The chain crosses the membrane as a helical span at residues 1105 to 1125 (LFNGLTLLILALISLFSIPVI). The Cytoplasmic segment spans residues 1126–1163 (YERHQVQIDHYLGLANKSVKDAMAKIQAKIPGLKRKAD).

Binds to RTN4R. Interacts with ATL1. Interacts with TMEM170A. Interacts with RTN4IP1. As to quaternary structure, interacts in trans with CNTNAP1. Interacts with REEP5. Interacts with synaptic plasticity regulator PANTS; the interaction results in enhanced RTN4-mediated inhibition of AMPA receptor clustering. Interacts with GPR50. In terms of assembly, homodimer. Interacts with BAD/Bcl-xl and BCL2. Interact with RTN3. Interacts with NGBR. Interacts with SPTLC1. Interacts with GRAMD4. Interacts with CDH5. Interacts with BACE1 and BACE2. Interacts with REEP5. Interacts with RETREG3. Interacts with BACE1 and BACE2. Interacts with TMEM33. As to expression, isoforms A, B and C are present in optic nerve, spinal cord and cerebral cortex. Isoforms A and B are present in dorsal root ganglion, sciatic nerve and PC12 cells after longer exposure. Isoforms B and C are detected in kidney, cartilage, skin, lung and spleen. Isoform C is expressed at high level in skeletal muscle. In adult animals isoform A is expressed mainly in the nervous system.

Its subcellular location is the endoplasmic reticulum membrane. It localises to the cell membrane. It is found in the synapse. The protein localises to the cell junction. Its function is as follows. Required to induce the formation and stabilization of endoplasmic reticulum (ER) tubules. They regulate membrane morphogenesis in the ER by promoting tubular ER production. They influence nuclear envelope expansion, nuclear pore complex formation and proper localization of inner nuclear membrane proteins. However each isoform have specific functions mainly depending on their tissue expression specificities. In terms of biological role, developmental neurite growth regulatory factor with a role as a negative regulator of axon-axon adhesion and growth, and as a facilitator of neurite branching. Regulates neurite fasciculation, branching and extension in the developing nervous system. Involved in down-regulation of growth, stabilization of wiring and restriction of plasticity in the adult CNS. Regulates the radial migration of cortical neurons via an RTN4R-LINGO1 containing receptor complex. Acts as a negative regulator of central nervous system angiogenesis. Inhibits spreading, migration and sprouting of primary brain microvascular endothelial cells (MVECs). Also induces the retraction of MVECs lamellipodia and filopodia in a ROCK pathway-dependent manner. Functionally, mainly function in endothelial cells and vascular smooth muscle cells, is also involved in immune system regulation. Modulator of vascular remodeling, promotes the migration of endothelial cells but inhibits the migration of vascular smooth muscle cells. Regulates endothelial sphingolipid biosynthesis with direct effects on vascular function and blood pressure. Inhibits serine palmitoyltransferase, SPTLC1, the rate-limiting enzyme of the novo sphingolipid biosynthetic pathway, thereby controlling production of endothelial sphingosine-1-phosphate (S1P). Required to promote macrophage homing and functions such as cytokine/chemokine gene expression involved in angiogenesis, arteriogenesis and tissue repair. Mediates ICAM1 induced transendothelial migration of leukocytes such as monocytes and neutrophils and acute inflammation. Necessary for immune responses triggered by nucleic acid sensing TLRs, such as TLR9, is required for proper TLR9 location to endolysosomes. Also involved in immune response to LPS. Plays a role in liver regeneration through the modulation of hepatocytes proliferation. Reduces the anti-apoptotic activity of Bcl-xl and Bcl-2. This is likely consecutive to their change in subcellular location, from the mitochondria to the endoplasmic reticulum, after binding and sequestration. With isoform C, inhibits BACE1 activity and amyloid precursor protein processing. Regulates cardiomyocyte apoptosis upon hypoxic conditions. With isoform B, inhibits BACE1 activity and amyloid precursor protein processing. This is Reticulon-4 (Rtn4) from Rattus norvegicus (Rat).